The following is a 140-amino-acid chain: Phosphoribosyl-AMP cyclohydrolase (140 aa).

Residue aspartate 78 participates in Mg(2+) binding. Cysteine 79 contributes to the Zn(2+) binding site. Aspartate 80 and aspartate 82 together coordinate Mg(2+). The Zn(2+) site is built by cysteine 96 and cysteine 103.

This sequence belongs to the PRA-CH family. Homodimer. Mg(2+) is required as a cofactor. Zn(2+) serves as cofactor.

The protein resides in the cytoplasm. The catalysed reaction is 1-(5-phospho-beta-D-ribosyl)-5'-AMP + H2O = 1-(5-phospho-beta-D-ribosyl)-5-[(5-phospho-beta-D-ribosylamino)methylideneamino]imidazole-4-carboxamide. It participates in amino-acid biosynthesis; L-histidine biosynthesis; L-histidine from 5-phospho-alpha-D-ribose 1-diphosphate: step 3/9. In terms of biological role, catalyzes the hydrolysis of the adenine ring of phosphoribosyl-AMP. This is Phosphoribosyl-AMP cyclohydrolase from Ralstonia nicotianae (strain ATCC BAA-1114 / GMI1000) (Ralstonia solanacearum).